A 262-amino-acid polypeptide reads, in one-letter code: Apolipoprotein A-I (262 aa).

A signal peptide spans 1–18 (MKAVVLTLAVLFLTGSQA). A run of 2 repeats spans residues 67-88 (LKLL…EQLG) and 89-110 (PVTQ…QEMN). Positions 67–262 (LKLLDNWDTL…DEASKKLNAQ (196 aa)) are 10 X approximate tandem repeats. The residue at position 109 (Met-109) is a Methionine sulfoxide. The stretch at 111–121 (KDLEEVKQKVQ) is one 3; half-length repeat. Repeat copies occupy residues 122 to 142 (PYLD…RQKV), 144 to 165 (PLGE…DRLS), 166 to 184 (PLAQ…KQLA), 185 to 206 (PYSD…EGGG), and 207 to 227 (SLAE…EKAK). One copy of the 9; half-length repeat lies at 228–238 (PALEDLRQGLM). A Methionine sulfoxide modification is found at Met-238. The stretch at 239 to 262 (PVLESLKVSILAAIDEASKKLNAQ) is repeat 10.

The protein belongs to the apolipoprotein A1/A4/E family. Homodimer. Interacts with APOA1BP and CLU. Component of a sperm activating protein complex (SPAP), consisting of APOA1, an immunoglobulin heavy chain, an immunoglobulin light chain and albumin. Interacts with NDRG1. Interacts with SCGB3A2. Interacts with NAXE and YJEFN3. Post-translationally, glycosylated. Palmitoylated. In terms of processing, phosphorylation sites are present in the extracellular medium. Major protein of plasma HDL, also found in chylomicrons.

The protein resides in the secreted. In terms of biological role, participates in the reverse transport of cholesterol from tissues to the liver for excretion by promoting cholesterol efflux from tissues and by acting as a cofactor for the lecithin cholesterol acyltransferase (LCAT). As part of the SPAP complex, activates spermatozoa motility. This Pantholops hodgsonii (Chiru) protein is Apolipoprotein A-I (APOA1).